A 544-amino-acid chain; its full sequence is MTKFIFVTGGVVSSLGKGIAAASIAAILESRGLNVTMLKLDPYINVDPGTMSPFQHGEVFVTDDGAETDLDLGHYERFIDSTMTRRNSFSTGQVYENVIAKERRGDYLGGTVQVIPHITDEIKRRIHEGAAGYDVAIVEIGGTVGDIESLPFLEAIRQMRSQLGRNNTLFAHLSYVPYIAAAGEIKTKPTQHTVKEMLSIGLQPDILICRMDRTMPADERRKIALFCNVEERAIVGSYDVDSIYECPEMLHDQGIDNIITEQLQLNVQQADLTAWKKIVHAIQNPKHTVKIAMVGKYVDLTESYKSLIEALKHAGIHTETDVQITFVDSESIEKNNGDVSMLKDMDAILVPGGFGSRGVEGKIAAVRYARENNVPYLGICLGMQIALIEYARDVAGLKGANSTEFDLKCAAPVVALIDEWQTADGSVETRDESADLGGTMRLGAQEVELKAGSLAAKIYGSEHIRERHRHRYEVNNNYVPTLEQAGLVIGGVSAGRERLVETIELPNHPWFFACQFHPEFTSNPRKGHPLFTAFVKAALNNKKA.

An amidoligase domain region spans residues 1–265 (MTKFIFVTGG…DNIITEQLQL (265 aa)). Residue serine 13 coordinates CTP. Residue serine 13 coordinates UTP. ATP-binding positions include 14–19 (SLGKGI) and aspartate 71. Mg(2+) is bound by residues aspartate 71 and glutamate 139. Residues 146-148 (DIE), 186-191 (KTKPTQ), and lysine 222 contribute to the CTP site. UTP contacts are provided by residues 186 to 191 (KTKPTQ) and lysine 222. One can recognise a Glutamine amidotransferase type-1 domain in the interval 290 to 544 (KIAMVGKYVD…VKAALNNKKA (255 aa)). Position 353 (glycine 353) interacts with L-glutamine. Residue cysteine 380 is the Nucleophile; for glutamine hydrolysis of the active site. L-glutamine-binding positions include 381–384 (LGMQ), glutamate 404, and arginine 471. Active-site residues include histidine 517 and glutamate 519.

This sequence belongs to the CTP synthase family. Homotetramer.

The enzyme catalyses UTP + L-glutamine + ATP + H2O = CTP + L-glutamate + ADP + phosphate + 2 H(+). It carries out the reaction L-glutamine + H2O = L-glutamate + NH4(+). It catalyses the reaction UTP + NH4(+) + ATP = CTP + ADP + phosphate + 2 H(+). It functions in the pathway pyrimidine metabolism; CTP biosynthesis via de novo pathway; CTP from UDP: step 2/2. Its activity is regulated as follows. Allosterically activated by GTP, when glutamine is the substrate; GTP has no effect on the reaction when ammonia is the substrate. The allosteric effector GTP functions by stabilizing the protein conformation that binds the tetrahedral intermediate(s) formed during glutamine hydrolysis. Inhibited by the product CTP, via allosteric rather than competitive inhibition. Its function is as follows. Catalyzes the ATP-dependent amination of UTP to CTP with either L-glutamine or ammonia as the source of nitrogen. Regulates intracellular CTP levels through interactions with the four ribonucleotide triphosphates. This Neisseria meningitidis serogroup C / serotype 2a (strain ATCC 700532 / DSM 15464 / FAM18) protein is CTP synthase.